Consider the following 164-residue polypeptide: MSSESKLIPIGIISSPYGIRGQVAIKSFTDPASNILNYELKDYRKNIIKIHSAKILSKKIICNIDQIVTRTAAEQLTRTKLYIYKHELPQLPDSEYYVANLNGIKVKNLEGEIIGKINNICNYNAGDIIEVVYNDGKKIMYPFTNEIFPQITEDFVVIVPPEFI.

The region spanning 93-164 (DSEYYVANLN…FVVIVPPEFI (72 aa)) is the PRC barrel domain.

It belongs to the RimM family. As to quaternary structure, binds ribosomal protein uS19.

Its subcellular location is the cytoplasm. Its function is as follows. An accessory protein needed during the final step in the assembly of 30S ribosomal subunit, possibly for assembly of the head region. Essential for efficient processing of 16S rRNA. May be needed both before and after RbfA during the maturation of 16S rRNA. It has affinity for free ribosomal 30S subunits but not for 70S ribosomes. This Orientia tsutsugamushi (strain Boryong) (Rickettsia tsutsugamushi) protein is Ribosome maturation factor RimM.